We begin with the raw amino-acid sequence, 617 residues long: Acetolactate synthase large subunit (617 aa).

Thiamine diphosphate is bound at residue E71. Residues R173, 281 to 302 (HGTAYANFAVTECDLLIAVGAR), and 324 to 343 (EIDPAEIGKNRKADVAVLGD) each bind FAD. Positions 413–492 (QHQMWAAQHL…VKVVIVNNHW (80 aa)) are thiamine pyrophosphate binding. Mg(2+) is bound by residues D463 and N490.

The protein belongs to the TPP enzyme family. In terms of assembly, dimer of large and small chains. Mg(2+) is required as a cofactor. Requires thiamine diphosphate as cofactor.

It catalyses the reaction 2 pyruvate + H(+) = (2S)-2-acetolactate + CO2. It functions in the pathway amino-acid biosynthesis; L-isoleucine biosynthesis; L-isoleucine from 2-oxobutanoate: step 1/4. The protein operates within amino-acid biosynthesis; L-valine biosynthesis; L-valine from pyruvate: step 1/4. The protein is Acetolactate synthase large subunit (ilvB) of Parasynechococcus marenigrum (strain WH8102).